The primary structure comprises 442 residues: Septin-8 (442 aa).

The segment covering 1–16 (MAATDLERISNAEPEP) has biased composition (basic and acidic residues). Positions 1–21 (MAATDLERISNAEPEPRSLSL) are disordered. An N-acetylalanine modification is found at Ala2. Residue Ser10 is modified to Phosphoserine. Residues 41–307 (QGFSFNILCV…ELYRRCKLEE (267 aa)) form the Septin-type G domain. Residues 51-58 (GETGIGKS) form a G1 motif region. Residues 51–58 (GETGIGKS), Gly106, 187–195 (KADTISKSE), Gly241, and Arg256 contribute to the GTP site. Positions 103-106 (DAVG) are G3 motif. Positions 186-189 (AKAD) are G4 motif. The stretch at 322-407 (LQETYEAKRK…FNCRKAAMEA (86 aa)) forms a coiled coil. The segment covering 411 to 420 (QALHATSQQP) has biased composition (polar residues). The disordered stretch occupies residues 411–442 (QALHATSQQPLRKDKDKKKVGGWSSIYSVTIP).

Belongs to the TRAFAC class TrmE-Era-EngA-EngB-Septin-like GTPase superfamily. Septin GTPase family. In terms of assembly, septins polymerize into heterooligomeric protein complexes that form filaments, and can associate with cellular membranes, actin filaments and microtubules. GTPase activity is required for filament formation. Interacts with SEPTIN7. Interacts with CDK14, SEPTIN4 and SEPTIN5. Interacts with VAMP2; the interaction inhibits interaction of VAMP2 with SYP. Interacts with STX1A. In terms of tissue distribution, expressed in cerebrum, hippocampus and cerebellum (at protein level). Expressed in heart (at protein level).

It localises to the cytoplasm. The protein resides in the cytoskeleton. It is found in the synapse. Its subcellular location is the cell projection. The protein localises to the axon. It localises to the cytoplasmic vesicle. The protein resides in the secretory vesicle. It is found in the synaptic vesicle membrane. Its subcellular location is the presynapse. Filament-forming cytoskeletal GTPase. May play a role in platelet secretion. Seems to participate in the process of SNARE complex formation in synaptic vesicles. In Rattus norvegicus (Rat), this protein is Septin-8.